A 279-amino-acid chain; its full sequence is Ultraviolet N-glycosylase/AP lyase (279 aa).

Residues 123–142 (LEDLVALPGVGRKTAFVVLG) form the HhH domain. 4 residues coordinate [4Fe-4S] cluster: Cys-203, Cys-210, Cys-213, and Cys-219. The interval 256–279 (TAGAAGPRPRAGGXAPGLPAQPFR) is disordered.

It belongs to the Nth/MutY family. Requires [4Fe-4S] cluster as cofactor.

Its function is as follows. DNA repair enzyme that has both DNA N-glycosylase activity and AP-lyase activity. Initiates repair at cis-syn pyrimidine dimers. Proceeds via an imino enzyme:DNA intermediate. The protein is Ultraviolet N-glycosylase/AP lyase (pdg) of Micrococcus luteus (strain ATCC 4698 / DSM 20030 / JCM 1464 / CCM 169 / CCUG 5858 / IAM 1056 / NBRC 3333 / NCIMB 9278 / NCTC 2665 / VKM Ac-2230) (Micrococcus lysodeikticus).